A 393-amino-acid polypeptide reads, in one-letter code: Dual-specificity RNA methyltransferase RlmN (393 aa).

The disordered stretch occupies residues 1 to 22 (MSEQLLSELSPVAATSPSPAPA). Residues 10-22 (SPVAATSPSPAPA) show a composition bias toward low complexity. Glu-114 (proton acceptor) is an active-site residue. The 239-residue stretch at 120-358 (EDDRATLCVS…TTIVRKTRGD (239 aa)) folds into the Radical SAM core domain. A disulfide bridge links Cys-127 with Cys-364. Cys-134, Cys-138, and Cys-141 together coordinate [4Fe-4S] cluster. S-adenosyl-L-methionine contacts are provided by residues 188 to 189 (GE), Ser-220, 242 to 244 (SLH), and Asn-321. Cys-364 functions as the S-methylcysteine intermediate in the catalytic mechanism.

This sequence belongs to the radical SAM superfamily. RlmN family. [4Fe-4S] cluster serves as cofactor.

The protein localises to the cytoplasm. It catalyses the reaction adenosine(2503) in 23S rRNA + 2 reduced [2Fe-2S]-[ferredoxin] + 2 S-adenosyl-L-methionine = 2-methyladenosine(2503) in 23S rRNA + 5'-deoxyadenosine + L-methionine + 2 oxidized [2Fe-2S]-[ferredoxin] + S-adenosyl-L-homocysteine. The catalysed reaction is adenosine(37) in tRNA + 2 reduced [2Fe-2S]-[ferredoxin] + 2 S-adenosyl-L-methionine = 2-methyladenosine(37) in tRNA + 5'-deoxyadenosine + L-methionine + 2 oxidized [2Fe-2S]-[ferredoxin] + S-adenosyl-L-homocysteine. In terms of biological role, specifically methylates position 2 of adenine 2503 in 23S rRNA and position 2 of adenine 37 in tRNAs. m2A2503 modification seems to play a crucial role in the proofreading step occurring at the peptidyl transferase center and thus would serve to optimize ribosomal fidelity. The polypeptide is Dual-specificity RNA methyltransferase RlmN (Sodalis glossinidius (strain morsitans)).